A 274-amino-acid polypeptide reads, in one-letter code: Large ribosomal subunit protein uL2 (274 aa).

The interval 223 to 274 is disordered; it reads VAMNPVDHPHGGGEGRTSGGRHPVTPWGVPTKGYKTRSNKRTDKYIVRRRNK.

The protein belongs to the universal ribosomal protein uL2 family. In terms of assembly, part of the 50S ribosomal subunit. Forms a bridge to the 30S subunit in the 70S ribosome.

Its function is as follows. One of the primary rRNA binding proteins. Required for association of the 30S and 50S subunits to form the 70S ribosome, for tRNA binding and peptide bond formation. It has been suggested to have peptidyltransferase activity; this is somewhat controversial. Makes several contacts with the 16S rRNA in the 70S ribosome. The sequence is that of Large ribosomal subunit protein uL2 from Shewanella putrefaciens (strain CN-32 / ATCC BAA-453).